A 4118-amino-acid chain; its full sequence is BEACH domain-containing protein lvsB (4118 aa).

A disordered region spans residues 1 to 35; it reads MNRNFNNINNNNNNNNNYHGYQYHQQQQQQNQQQQ. The helical transmembrane segment at 198-218 threads the bilayer; sequence GIPLSFLNFLITILLRILSLP. Low complexity predominate over residues 236–257; it reads NFSGNNNNNFNNNNHYFNNNHN. 3 disordered regions span residues 236-267, 332-382, and 621-644; these read NFSGNNNNNFNNNNHYFNNNHNNHNHHYQHHQ, PLSS…SKNN, and ISSSDNNNNNNNNSDGVNDDKNNN. Residues 258 to 267 are compositionally biased toward basic residues; the sequence is NHNHHYQHHQ. 2 stretches are compositionally biased toward low complexity: residues 332–381 and 621–636; these read PLSS…NSKN and ISSSDNNNNNNNNSDG. The chain crosses the membrane as a helical span at residues 827 to 847; sequence YLVLYMIVTEILSLLLELLVP. Residues 1155–1170 are compositionally biased toward low complexity; that stretch reads NGGSISPSSIINNMNS. Disordered regions lie at residues 1155–1213, 1599–1622, 1643–1681, 1928–1968, 2015–2044, 2537–2574, 2702–2741, 2754–2791, 2902–3007, 3245–3265, and 3348–3418; these read NGGS…FNNN, ANTTTNSTTASTTTTTTNSTTAVS, NSGISRENSLGGRDSIGSNSSSSSSSSNSGVSSGSSTNL, GNFL…ISSS, STNNNSNNSNNSNSNNNNNNNNTNYNSNSL, RRGSSSSSTNSTTNNNNNNSSTTTTSNNNNNNNENNNE, FSPSRSKEKEKEKEKEKEKEKEKEKERERERETTNVTSDS, DQSNEESSTTDSDSTSDNNNNNNRNSYSGRNIRGNGIN, NTNS…NSNE, PLIPDLSTPSTPPSPQNTKDQ, and KTTA…NIVK. Composition is skewed to low complexity over residues 1657-1678 and 1935-1968; these read SIGSNSSSSSSSSNSGVSSGSS and SSSNNNLRERSINNNNNNNNNSNNNNNNNSISSS. Over residues 2540–2571 the composition is skewed to low complexity; that stretch reads SSSSSTNSTTNNNNNNSSTTTTSNNNNNNNEN. Positions 2705–2738 form a coiled coil; the sequence is SRSKEKEKEKEKEKEKEKEKEKERERERETTNVT. Positions 2706 to 2734 are enriched in basic and acidic residues; it reads RSKEKEKEKEKEKEKEKEKEKERERERET. 2 stretches are compositionally biased toward low complexity: residues 2758–2791 and 2902–2947; these read EESSTTDSDSTSDNNNNNNRNSYSGRNIRGNGIN and NTNS…NSTN. The span at 2948–2962 shows a compositional bias: polar residues; it reads QTITDTTLSPASSNV. 2 stretches are compositionally biased toward low complexity: residues 2963–2980 and 2988–3006; these read SISNQSTPISNNNNNNNS and SNINIPPTINISDSNSNSN. The BEACH-type PH domain occupies 3303-3479; that stretch reads KLGEKVNEVF…DRDIVYDLIM (177 aa). Residues 3357 to 3411 are compositionally biased toward low complexity; the sequence is SNNNNNNNNNNNNNNNNNNNNSNDTTSSINSTTATNTNTTNTTTTNTTTTTTTTN. A BEACH domain is found at 3491–3782; the sequence is AEVHGNILKM…QIFTKPHPKK (292 aa). WD repeat units follow at residues 3868–3907, 3924–3963, 3984–4027, 4029–4073, and 4075–4114; these read VLNDDIICGDITKNGRLFVTGGTAGTVKVWKRCNNDGTIM, GHTNSILCVTVSQEYSIIVSGSKDSNCIIWDLNRLTYINS, TFET…LAKQ, FVND…KIRT, and VSKSTITALAVSKDNTQLISGDINGLIECLSSRSFDGYSS.

The protein localises to the membrane. Its subcellular location is the lysosome. It localises to the endosome. Its function is as follows. Involved in negative regulation of lysosome biogenesis, by limiting the heterotypic fusion of early endosomes and postlysosomal compartments. This chain is BEACH domain-containing protein lvsB (lvsB), found in Dictyostelium discoideum (Social amoeba).